We begin with the raw amino-acid sequence, 97 residues long: Class II hydrophobin 1 (97 aa).

Positions 1–16 (MKFFAIAALFAAAAVA) are cleaved as a signal peptide. Positions 17-22 (QPLEDR) are excised as a propeptide. Cystine bridges form between cysteine 30–cysteine 79, cysteine 40–cysteine 70, cysteine 41–cysteine 53, and cysteine 80–cysteine 91.

It belongs to the cerato-ulmin hydrophobin family. In terms of assembly, homotetramer. Further self-assembles to form highly ordered films at water-air interfaces through intermolecular interactions.

It is found in the secreted. The protein localises to the cell wall. Its function is as follows. Aerial growth, conidiation, and dispersal of filamentous fungi in the environment rely upon a capability of their secreting small amphipathic proteins called hydrophobins (HPBs) with low sequence identity. Class I can self-assemble into an outermost layer of rodlet bundles on aerial cell surfaces, conferring cellular hydrophobicity that supports fungal growth, development and dispersal; whereas Class II form highly ordered films at water-air interfaces through intermolecular interactions but contribute nothing to the rodlet structure. Hbf1 is a class II hydrophobin that has a role in hyphal development and is in particular required for the formation of aerial hyphae. The protein is Class II hydrophobin 1 of Hypocrea jecorina (Trichoderma reesei).